The chain runs to 617 residues: 1-deoxy-D-xylulose-5-phosphate synthase (617 aa).

Thiamine diphosphate is bound by residues His80 and 121–123 (GHS). Asp152 contributes to the Mg(2+) binding site. Thiamine diphosphate is bound by residues 153–154 (GA), Asn181, Tyr277, and Glu360. A Mg(2+)-binding site is contributed by Asn181.

It belongs to the transketolase family. DXPS subfamily. As to quaternary structure, homodimer. It depends on Mg(2+) as a cofactor. The cofactor is thiamine diphosphate.

It catalyses the reaction D-glyceraldehyde 3-phosphate + pyruvate + H(+) = 1-deoxy-D-xylulose 5-phosphate + CO2. It functions in the pathway metabolic intermediate biosynthesis; 1-deoxy-D-xylulose 5-phosphate biosynthesis; 1-deoxy-D-xylulose 5-phosphate from D-glyceraldehyde 3-phosphate and pyruvate: step 1/1. In terms of biological role, catalyzes the acyloin condensation reaction between C atoms 2 and 3 of pyruvate and glyceraldehyde 3-phosphate to yield 1-deoxy-D-xylulose-5-phosphate (DXP). This Blochmanniella floridana protein is 1-deoxy-D-xylulose-5-phosphate synthase.